The following is a 620-amino-acid chain: Rpb7-binding protein seb1 (620 aa).

A CID domain is found at 1 to 151 (MSGIAEFDGI…SLRSKLKDAM (151 aa)). Disordered regions lie at residues 151–191 (MAST…RPVE) and 327–398 (SVPL…TIPP). Ser-343 is modified (phosphoserine). Over residues 361 to 374 (PSPSHLSIPSTLPP) the composition is skewed to low complexity. One can recognise an RRM domain in the interval 406–478 (RTLFLGGITR…TTIRTKWGVG (73 aa)). Positions 558-620 (RGRKPYRGGP…YVSQPPWQPQ (63 aa)) are disordered. Over residues 570–580 (HHGERHFDSGN) the composition is skewed to basic and acidic residues.

In terms of assembly, interacts with rpb7.

The protein localises to the nucleus. Its function is as follows. Involved in the processing of pol II transcripts. This is Rpb7-binding protein seb1 (seb1) from Schizosaccharomyces pombe (strain 972 / ATCC 24843) (Fission yeast).